A 290-amino-acid polypeptide reads, in one-letter code: Nucleotide-binding protein XfasM23_0667 (290 aa).

13–20 (GLSGSGKS) lines the ATP pocket. 65–68 (DIRS) contacts GTP.

Belongs to the RapZ-like family.

Displays ATPase and GTPase activities. The chain is Nucleotide-binding protein XfasM23_0667 from Xylella fastidiosa (strain M23).